The following is a 436-amino-acid chain: Tryptophan synthase beta chain (436 aa).

An N6-(pyridoxal phosphate)lysine modification is found at K129.

The protein belongs to the TrpB family. As to quaternary structure, tetramer of two alpha and two beta chains. It depends on pyridoxal 5'-phosphate as a cofactor.

The enzyme catalyses (1S,2R)-1-C-(indol-3-yl)glycerol 3-phosphate + L-serine = D-glyceraldehyde 3-phosphate + L-tryptophan + H2O. Its pathway is amino-acid biosynthesis; L-tryptophan biosynthesis; L-tryptophan from chorismate: step 5/5. The beta subunit is responsible for the synthesis of L-tryptophan from indole and L-serine. The protein is Tryptophan synthase beta chain of Prochlorococcus marinus (strain MIT 9313).